The primary structure comprises 352 residues: Protein-glutamate methylesterase/protein-glutamine glutaminase 2 (352 aa).

Positions 1-116 constitute a Response regulatory domain; that stretch reads MVVDDSAVVR…KQFLTDSADE (116 aa). The residue at position 50 (D50) is a 4-aspartylphosphate. Positions 162–352 constitute a CheB-type methylesterase domain; that stretch reads AQTTERIVAI…MAREIVTQLQ (191 aa). Catalysis depends on residues S174, H200, and D296.

Belongs to the CheB family. In terms of processing, phosphorylated by CheA. Phosphorylation of the N-terminal regulatory domain activates the methylesterase activity.

It is found in the cytoplasm. The catalysed reaction is [protein]-L-glutamate 5-O-methyl ester + H2O = L-glutamyl-[protein] + methanol + H(+). It carries out the reaction L-glutaminyl-[protein] + H2O = L-glutamyl-[protein] + NH4(+). Its function is as follows. Involved in chemotaxis. Part of a chemotaxis signal transduction system that modulates chemotaxis in response to various stimuli. Catalyzes the demethylation of specific methylglutamate residues introduced into the chemoreceptors (methyl-accepting chemotaxis proteins or MCP) by CheR. Also mediates the irreversible deamidation of specific glutamine residues to glutamic acid. This Xanthomonas axonopodis pv. citri (strain 306) protein is Protein-glutamate methylesterase/protein-glutamine glutaminase 2.